The chain runs to 187 residues: ATP synthase subunit b (187 aa).

The chain crosses the membrane as a helical span at residues 4–24; sequence LALFALLMVPAILLASGHDSG.

Belongs to the ATPase B chain family. As to quaternary structure, F-type ATPases have 2 components, F(1) - the catalytic core - and F(0) - the membrane proton channel. F(1) has five subunits: alpha(3), beta(3), gamma(1), delta(1), epsilon(1). F(0) has three main subunits: a(1), b(2) and c(10-14). The alpha and beta chains form an alternating ring which encloses part of the gamma chain. F(1) is attached to F(0) by a central stalk formed by the gamma and epsilon chains, while a peripheral stalk is formed by the delta and b chains.

It localises to the cell inner membrane. Functionally, f(1)F(0) ATP synthase produces ATP from ADP in the presence of a proton or sodium gradient. F-type ATPases consist of two structural domains, F(1) containing the extramembraneous catalytic core and F(0) containing the membrane proton channel, linked together by a central stalk and a peripheral stalk. During catalysis, ATP synthesis in the catalytic domain of F(1) is coupled via a rotary mechanism of the central stalk subunits to proton translocation. Its function is as follows. Component of the F(0) channel, it forms part of the peripheral stalk, linking F(1) to F(0). In Sulfurovum sp. (strain NBC37-1), this protein is ATP synthase subunit b.